The chain runs to 110 residues: Cytochrome bo(3) ubiquinol oxidase subunit 4 (110 aa).

At 1 to 18 (MANAHDTHHEGNHGSVKS) the chain is on the cytoplasmic side. A helical transmembrane segment spans residues 19-39 (YMIGFILSIILTAIPFGLAMS). The Periplasmic portion of the chain corresponds to 40–46 (PSLPKNL). A helical membrane pass occupies residues 47–67 (TVLIIVAMAVIQVVVHLVYFL). At 68-78 (HMDRSKEQRNN) the chain is on the cytoplasmic side. The helical transmembrane segment at 79–99 (VWTFLFTTLVIALLVGLSLWI) threads the bilayer. Residues 100 to 110 (MFSIHFEMLAK) are Periplasmic-facing.

It belongs to the cytochrome c oxidase bacterial subunit 4 family. In terms of assembly, heterooctamer of two A chains, two B chains, two C chains and two D chains.

Its subcellular location is the cell inner membrane. Cytochrome bo(3) ubiquinol terminal oxidase is the component of the aerobic respiratory chain of E.coli that predominates when cells are grown at high aeration. Has proton pump activity across the membrane in addition to electron transfer, pumping 2 protons/electron. The protein is Cytochrome bo(3) ubiquinol oxidase subunit 4 (cyoD) of Pseudomonas putida (Arthrobacter siderocapsulatus).